Here is a 597-residue protein sequence, read N- to C-terminus: DNA polymerase III subunit gamma/tau (597 aa).

44-51 (GERGTGKT) contacts ATP. Positions 63, 72, 75, and 78 each coordinate Zn(2+).

This sequence belongs to the DnaX/STICHEL family. As to quaternary structure, DNA polymerase III contains a core (composed of alpha, epsilon and theta chains) that associates with a tau subunit. This core dimerizes to form the POLIII' complex. PolIII' associates with the gamma complex (composed of gamma, delta, delta', psi and chi chains) and with the beta chain to form the complete DNA polymerase III complex.

The enzyme catalyses DNA(n) + a 2'-deoxyribonucleoside 5'-triphosphate = DNA(n+1) + diphosphate. In terms of biological role, DNA polymerase III is a complex, multichain enzyme responsible for most of the replicative synthesis in bacteria. This DNA polymerase also exhibits 3' to 5' exonuclease activity. The chain is DNA polymerase III subunit gamma/tau (dnaX) from Mycoplasma genitalium (strain ATCC 33530 / DSM 19775 / NCTC 10195 / G37) (Mycoplasmoides genitalium).